The following is a 153-amino-acid chain: 17.6 kDa class I heat shock protein (153 aa).

Positions 38–153 (ETAAIVNARI…PMVKAIDISG (116 aa)) constitute a sHSP domain.

The protein belongs to the small heat shock protein (HSP20) family. In terms of assembly, forms oligomeric structures.

The protein localises to the cytoplasm. The protein is 17.6 kDa class I heat shock protein (HSP17.6) of Helianthus annuus (Common sunflower).